Reading from the N-terminus, the 204-residue chain is High frequency lysogenization protein HflD homolog (204 aa).

It belongs to the HflD family.

The protein localises to the cytoplasm. It is found in the cell inner membrane. The protein is High frequency lysogenization protein HflD homolog of Ruthia magnifica subsp. Calyptogena magnifica.